The sequence spans 145 residues: Actin-depolymerizing factor 2 (145 aa).

The ADF-H domain maps to 13-145; it reads GMGVAPDIRD…DLEVLRERAH (133 aa).

The protein belongs to the actin-binding proteins ADF family.

In terms of biological role, actin-depolymerizing protein. Severs actin filaments (F-actin) and binds to actin monomers. This Oryza sativa subsp. japonica (Rice) protein is Actin-depolymerizing factor 2 (ADF2).